Consider the following 240-residue polypeptide: Superoxide dismutase [Cu-Zn] (240 aa).

Positions 1–32 (MPKPADHRNHAAVSTSVLSALFLGAGAALLSA) are cleaved as a signal peptide. A lipid anchor (N-palmitoyl cysteine) is attached at C33. Residue C33 is the site of S-diacylglycerol cysteine attachment. 2 stretches are compositionally biased toward polar residues: residues 36–51 (PQHA…SIWT) and 68–77 (GAQSLTSTLT). The interval 36-77 (PQHASTVPGTTPSIWTGSPAPSGLSGHDEESPGAQSLTSTLT) is disordered. Cu cation contacts are provided by H116 and H118. A disulfide bridge connects residues C123 and C234. Positions 146 and 158 each coordinate Zn(2+). H195 is a binding site for Cu cation.

The protein belongs to the Cu-Zn superoxide dismutase family. Requires Cu cation as cofactor. Zn(2+) is required as a cofactor.

It localises to the cell membrane. The enzyme catalyses 2 superoxide + 2 H(+) = H2O2 + O2. Inhibited by the copper chelator diethyl dithiocarbamate. In terms of biological role, destroys radicals which are normally produced within the cells and which are toxic to biological systems. May play a role in favoring mycobacterial survival in phagocytes. This chain is Superoxide dismutase [Cu-Zn] (sodC), found in Mycobacterium bovis (strain ATCC BAA-935 / AF2122/97).